The following is a 207-amino-acid chain: uncharacterized protein (207 aa).

It localises to the mitochondrion. This is an uncharacterized protein from Marchantia polymorpha (Common liverwort).